The following is a 574-amino-acid chain: Adenine deaminase (574 aa).

Belongs to the metallo-dependent hydrolases superfamily. Adenine deaminase family. Mn(2+) is required as a cofactor.

It catalyses the reaction adenine + H2O + H(+) = hypoxanthine + NH4(+). The sequence is that of Adenine deaminase from Thermosipho melanesiensis (strain DSM 12029 / CIP 104789 / BI429).